The primary structure comprises 813 residues: MTWPSEARPNINMEYRLHTVKVYVMMEDKQWKNVGTGQISSKYSEQLQGVCLLVHSLSDGSPIMECKIHPNVPYQKQQGKIIIWSEAKNHGMAIHFQEPNDCQEIWEDICQIQGKDPHVEITQELTDDLETFEHMPLIWNWVEMSNCEIHTLKNIAELFPFVFEMPSQKERLALFLENEGYIKKLLQLFHTCEKLKNMEGLYYLHNIIKGILFLNNTRLFNIMFSDEFFMDIVGCLEYDPALDQPKQYREFLTQNSKFKEVIPIIHSQLRQKIQQTYRMQYVHDIMLPTPSIFQTNLLSDITTMIFFNKINIITMIQEDENFLLEVFSQLKDNSIGDERRIELLLFLKEFCEFAKTLQSQKKNELLKTLIKLGIMSVLKVVVHMNDYQIQVGALDIFAYLVEYSPCLVRAYAMEEAQDSEDNDDLLINIMIKQMICDFDPEFSQGIIMTAVLHELLNPENMRTTAKGCERKVFLNFFYKRYMRKLIAPILSIRVKYDSNDNRVYICPDNYQNAQLLGAVLEILTFCVQYHSMYIKHYIFSNNLLRSILVLMSSKHTFLILCAVRFMRKIIGLKDKMYNHYIIKKNLFEPVVNAFMHNGHRYNMLNSAIIELFEFIRKENITSLIVNIVENFFRAFKSIEYVQTFKGLKTKYEEEKKRKSQRRKNLHSIMHPKMYYRHIEDMEVKVKADICCRGIIEEEERQGGGEEGAILPMGSDFTNNYDIFMKNKDTNESESAIEGQKIKSSEASECCPSHGDASATRMSRSHCSSLVPLVDYLYDTDDENDDDPYGNDKHEDEHEDEDEEPPPKRPNLST.

Residues 730–813 (NESESAIEGQ…PPPKRPNLST (84 aa)) are disordered. Positions 777–788 (YDTDDENDDDPY) are enriched in acidic residues.

It belongs to the SMEK family.

This Mus musculus (Mouse) protein is Protein PPP4R3C1.